A 165-amino-acid chain; its full sequence is Small ribosomal subunit protein bS16 (165 aa).

Belongs to the bacterial ribosomal protein bS16 family.

The polypeptide is Small ribosomal subunit protein bS16 (Azobacteroides pseudotrichonymphae genomovar. CFP2).